The sequence spans 196 residues: Charged multivesicular body protein 1a (196 aa).

Methionine 1 is subject to N-acetylmethionine. Positions 5–47 (LFQLKFTAKQLEKLAKKAEKDSKAEQAKVKKALLQKNVECARV) form a coiled coil. At serine 101 the chain carries Phosphoserine. Positions 102-124 (TMDLQKVSSVMDRFEQQVQNLDV) form a coiled coil. Serine 173 carries the post-translational modification Phosphoserine. Residues 173 to 196 (SAVGESSVRSQEDQLSRRLAALRN) are disordered. An MIT-interacting motif motif is present at residues 185 to 195 (DQLSRRLAALR).

Belongs to the SNF7 family. As to quaternary structure, probable peripherally associated component of the endosomal sorting required for transport complex III (ESCRT-III). ESCRT-III components are thought to multimerize to form a flat lattice on the perimeter membrane of the endosome. Several assembly forms of ESCRT-III may exist that interact and act sequentially. Self-associates. Interacts with CHMP1B. Interacts with VPS4A. Interacts with VPS4B. Interacts with PHF1. Interacts with IST1. Interacts with MITD1. In terms of tissue distribution, expressed in placenta, cultured skin fibroblasts and in osteoblast cell line MG-63.

It is found in the cytoplasm. The protein resides in the endosome membrane. It localises to the nucleus matrix. In terms of biological role, probable peripherally associated component of the endosomal sorting required for transport complex III (ESCRT-III) which is involved in multivesicular bodies (MVBs) formation and sorting of endosomal cargo proteins into MVBs. MVBs contain intraluminal vesicles (ILVs) that are generated by invagination and scission from the limiting membrane of the endosome and mostly are delivered to lysosomes enabling degradation of membrane proteins, such as stimulated growth factor receptors, lysosomal enzymes and lipids. The MVB pathway appears to require the sequential function of ESCRT-O, -I,-II and -III complexes. ESCRT-III proteins mostly dissociate from the invaginating membrane before the ILV is released. The ESCRT machinery also functions in topologically equivalent membrane fission events, such as the terminal stages of cytokinesis and the budding of enveloped viruses (HIV-1 and other lentiviruses). ESCRT-III proteins are believed to mediate the necessary vesicle extrusion and/or membrane fission activities, possibly in conjunction with the AAA ATPase VPS4. Involved in cytokinesis. Involved in recruiting VPS4A and/or VPS4B to the midbody of dividing cells. May also be involved in chromosome condensation. Targets the Polycomb group (PcG) protein BMI1/PCGF4 to regions of condensed chromatin. May play a role in stable cell cycle progression and in PcG gene silencing. The chain is Charged multivesicular body protein 1a (CHMP1A) from Homo sapiens (Human).